Reading from the N-terminus, the 168-residue chain is Monothiol glutaredoxin-S7, chloroplastic (168 aa).

The N-terminal 54 residues, 1–54 (MAATAAASVAAISPLPGASLPRPVSARVPLLPRASPPTWRLSVGSARARSTRCL), are a transit peptide targeting the chloroplast. The region spanning 67–168 (RATLDKVVGS…QETLEKAMLS (102 aa)) is the Glutaredoxin domain. Glutathione is bound at residue K84. C92 provides a ligand contact to [2Fe-2S] cluster. Residues R121, F133, and 146–147 (CD) contribute to the glutathione site.

Belongs to the glutaredoxin family. CGFS subfamily.

It is found in the plastid. It localises to the chloroplast. Functionally, may only reduce GSH-thiol disulfides, but not protein disulfides. The protein is Monothiol glutaredoxin-S7, chloroplastic (GRXS7) of Oryza sativa subsp. japonica (Rice).